Here is a 168-residue protein sequence, read N- to C-terminus: ATP synthase subunit b (168 aa).

The chain crosses the membrane as a helical span at residues 7 to 26 (FVLSNFIFTLINLWIMYWVL).

This sequence belongs to the ATPase B chain family. In terms of assembly, F-type ATPases have 2 components, F(1) - the catalytic core - and F(0) - the membrane proton channel. F(1) has five subunits: alpha(3), beta(3), gamma(1), delta(1), epsilon(1). F(0) has three main subunits: a(1), b(2) and c(10-14). The alpha and beta chains form an alternating ring which encloses part of the gamma chain. F(1) is attached to F(0) by a central stalk formed by the gamma and epsilon chains, while a peripheral stalk is formed by the delta and b chains.

It is found in the cell membrane. Functionally, f(1)F(0) ATP synthase produces ATP from ADP in the presence of a proton or sodium gradient. F-type ATPases consist of two structural domains, F(1) containing the extramembraneous catalytic core and F(0) containing the membrane proton channel, linked together by a central stalk and a peripheral stalk. During catalysis, ATP synthesis in the catalytic domain of F(1) is coupled via a rotary mechanism of the central stalk subunits to proton translocation. In terms of biological role, component of the F(0) channel, it forms part of the peripheral stalk, linking F(1) to F(0). This is ATP synthase subunit b from Alkaliphilus metalliredigens (strain QYMF).